Here is a 394-residue protein sequence, read N- to C-terminus: 2-aminobenzenesulfonate 2,3-dioxygenase subunit alpha (394 aa).

Residues 43 to 154 (WKFVCHVSEI…TETYLGLVFV (112 aa)) enclose the Rieske domain. Residues cysteine 85, histidine 87, cysteine 105, and histidine 108 each coordinate [2Fe-2S] cluster. Residues histidine 209 and histidine 213 each contribute to the Fe cation site.

The protein belongs to the bacterial ring-hydroxylating dioxygenase alpha subunit family. Heterotetramer with a alpha2beta2 structure. It depends on [2Fe-2S] cluster as a cofactor. Fe cation is required as a cofactor.

The catalysed reaction is 2-aminobenzenesulfonate + NADH + O2 + 2 H(+) = 2,3-dihydroxybenzenesulfonate + NH4(+) + NAD(+). Its activity is regulated as follows. Inhibited by o-phenanthroline. In terms of biological role, alpha subunit of the oxygenase component of the 2-aminobenzenesulfonate 2,3-dioxygenase system (deaminating) (ABSDOS). Can use 2-aminobenzenesulfonate (ABS), benzenesulfonate (BS), 4-toluenesulfonate (TS), 2-nitrobenzenesulfonate, 3- and 4-aminobenzenesulfonates, 4-chloro- and 4-hydroxybenzenesulfonates and pyridine-3-sulfonate as substrates. No desulfonation of ABS to aminocatechol or aminophenol detected. The sequence is that of 2-aminobenzenesulfonate 2,3-dioxygenase subunit alpha from Alcaligenes sp.